Consider the following 197-residue polypeptide: Glycerol-3-phosphate acyltransferase (197 aa).

The next 4 helical transmembrane spans lie at 1 to 21 (MNFLLLLLAAYALGSTPFAIV), 78 to 98 (PVEAALAGLAAFLGHVFSVFL), 112 to 132 (VLAGINAWVALSALFVWLAVA), and 155 to 175 (VLLGATPTVAVLALIAGILVW).

Belongs to the PlsY family. Probably interacts with PlsX.

It is found in the cell inner membrane. The enzyme catalyses an acyl phosphate + sn-glycerol 3-phosphate = a 1-acyl-sn-glycero-3-phosphate + phosphate. Its pathway is lipid metabolism; phospholipid metabolism. Its function is as follows. Catalyzes the transfer of an acyl group from acyl-phosphate (acyl-PO(4)) to glycerol-3-phosphate (G3P) to form lysophosphatidic acid (LPA). This enzyme utilizes acyl-phosphate as fatty acyl donor, but not acyl-CoA or acyl-ACP. This is Glycerol-3-phosphate acyltransferase from Aromatoleum aromaticum (strain DSM 19018 / LMG 30748 / EbN1) (Azoarcus sp. (strain EbN1)).